A 428-amino-acid chain; its full sequence is tRNA(Ile2) 2-agmatinylcytidine synthetase TiaS (428 aa).

The protein belongs to the TiaS family.

Its subcellular location is the cytoplasm. It carries out the reaction cytidine(34) in tRNA(Ile2) + agmatine + ATP + H2O = 2-agmatinylcytidine(34) in tRNA(Ile2) + AMP + 2 phosphate + 2 H(+). ATP-dependent agmatine transferase that catalyzes the formation of 2-agmatinylcytidine (agm2C) at the wobble position (C34) of tRNA(Ile2), converting the codon specificity from AUG to AUA. This chain is tRNA(Ile2) 2-agmatinylcytidine synthetase TiaS, found in Methanosarcina mazei (strain ATCC BAA-159 / DSM 3647 / Goe1 / Go1 / JCM 11833 / OCM 88) (Methanosarcina frisia).